Consider the following 264-residue polypeptide: Short chain dehydrogenase/reductase AacuN (264 aa).

NADP(+) is bound by residues I24, D70, N97, and R130. Active-site proton donor residues include S146, S147, and Y161. Residues Y161, K165, and T196 each contribute to the NADP(+) site. K165 functions as the Lowers pKa of active site Tyr in the catalytic mechanism.

The protein belongs to the short-chain dehydrogenases/reductases (SDR) family.

The catalysed reaction is 3,8,9,10-tetrahydroxy-6-methyl-1,4-dihydroanthracen-1-one + NADPH + H(+) = (3R)-3,8,9,10-tetrahydroxy-6-methyl-1,2,3,4-tetrahydroanthracen-1-one + NADP(+). The protein operates within secondary metabolite biosynthesis. Its function is as follows. Atrochrysone carboxylic acid synthase; part of the gene cluster that mediates the biosynthesis of the tetrahydroxanthone dimer secalonic acid D. The pathway begins with the synthesis of atrochrysone thioester by the polyketide synthase AacuL. The atrochrysone carboxyl ACP thioesterase AacuM then breaks the thioester bond and releases the atrochrysone carboxylic acid from AacuL. Atrochrysone carboxylic acid is decarboxylated by the decarboxylase AacuI, and oxidized by the anthrone oxygenase AacuG to yield emodin. Emodin is then reduced to emodin hydroquinone by a yet unidentified oxidoreductase. A-ring reduction by the short chain dehydrogenase AacuN, dehydration by the scytalone dehydratase-like protein AacuK and probable spontaneous re-oxidation, results in overall deoxygenation to chrysophanol. Baeyer-Villiger oxidation by the Baeyer-Villiger monooxygenase (BVMO) AacuH then yields monodictyphenone. Monodictyphenone is transformed into compounds with the tetrahydroxanthone skeleton via methylesterification by the methyltransferase AacuQ, followed by the action of the flavin-dependent monooxygenase AacuC, the isomerase AacuP, and the short chain dehydrogenase/reductase AacuF or AacuD. AacuF and AacuD should accept the same compound as a substrate but perform the ketoreduction with a different stereoselectivity, thus yielding blennolides B and A, respectively. In the final step of the biosynthesis, the cytochrome P450 monooxygenase AacuE accepts blennolide B and/or blennolide A to conduct the dimerization reaction to furnish the tetrahydroxanthone dimers, secalonic acids D, B, and F. The protein is Short chain dehydrogenase/reductase AacuN of Aspergillus aculeatus (strain ATCC 16872 / CBS 172.66 / WB 5094).